The primary structure comprises 146 residues: Vascular endothelial growth factor isoform GtVF (146 aa).

The N-terminal stretch at 1–24 is a signal peptide; that stretch reads MAAYLLAVAILFCIQGWPSGTVQG. Gln-25 bears the Pyrrolidone carboxylic acid mark. Disulfide bonds link Cys-38-Cys-80, Cys-69-Cys-115, and Cys-73-Cys-117. The segment at 116 to 146 is disordered; that stretch reads ECRPRSRSGVDSGKRKRNPEEGEPRAKFPFV. Over residues 133–146 the composition is skewed to basic and acidic residues; sequence NPEEGEPRAKFPFV.

The protein belongs to the PDGF/VEGF growth factor family. Snake venom VEGF subfamily. As to quaternary structure, homodimer; disulfide-linked. Expressed by the venom gland.

Its subcellular location is the secreted. Functionally, snake venom VEGFs that may contribute to venom dispersion and prey subjugation by inducing vascular permeability and hypotension. This protein induces an increase in capillary permeability after intradermal injection, in a VEGFR-2 (KDR) dependent manner. In addition, it provokes a drastic hypotensive effect after intravenous injection. The hypotension is mediated by nitric oxide (NO), which is produced by VEGF-activated endothelium NO synthase. Also induces angiogenesis in vitro. Unlike other crotalid VEGFs, this protein probably interacts with VEGF receptor-2 (KDR). The chain is Vascular endothelial growth factor isoform GtVF from Gloydius tsushimaensis (Tsushima Island pitviper).